A 140-amino-acid chain; its full sequence is Holo-[acyl-carrier-protein] synthase (140 aa).

Mg(2+) contacts are provided by Asp8 and Glu62.

This sequence belongs to the P-Pant transferase superfamily. AcpS family. The cofactor is Mg(2+).

The protein resides in the cytoplasm. The catalysed reaction is apo-[ACP] + CoA = holo-[ACP] + adenosine 3',5'-bisphosphate + H(+). Functionally, transfers the 4'-phosphopantetheine moiety from coenzyme A to a Ser of acyl-carrier-protein. The protein is Holo-[acyl-carrier-protein] synthase of Cupriavidus pinatubonensis (strain JMP 134 / LMG 1197) (Cupriavidus necator (strain JMP 134)).